The primary structure comprises 692 residues: Elongation factor G (692 aa).

The tr-type G domain occupies 8 to 283; the sequence is QDLRNIGIVA…AVVDYLPSPL (276 aa). GTP contacts are provided by residues 17-24, 81-85, and 135-138; these read AHIDAGKT, DTPGH, and NKLD.

It belongs to the TRAFAC class translation factor GTPase superfamily. Classic translation factor GTPase family. EF-G/EF-2 subfamily.

It is found in the cytoplasm. In terms of biological role, catalyzes the GTP-dependent ribosomal translocation step during translation elongation. During this step, the ribosome changes from the pre-translocational (PRE) to the post-translocational (POST) state as the newly formed A-site-bound peptidyl-tRNA and P-site-bound deacylated tRNA move to the P and E sites, respectively. Catalyzes the coordinated movement of the two tRNA molecules, the mRNA and conformational changes in the ribosome. In Hydrogenobaculum sp. (strain Y04AAS1), this protein is Elongation factor G.